A 103-amino-acid chain; its full sequence is Large ribosomal subunit protein bL21 (103 aa).

It belongs to the bacterial ribosomal protein bL21 family. In terms of assembly, part of the 50S ribosomal subunit. Contacts protein L20.

Functionally, this protein binds to 23S rRNA in the presence of protein L20. This is Large ribosomal subunit protein bL21 from Hamiltonella defensa subsp. Acyrthosiphon pisum (strain 5AT).